We begin with the raw amino-acid sequence, 204 residues long: Holliday junction branch migration complex subunit RuvA (204 aa).

A domain I region spans residues 1–63; the sequence is MIGKLSGKAD…EEHIHLYGFL (63 aa). The tract at residues 64–142 is domain II; the sequence is TLEEKNFFNL…KISSSSAIKD (79 aa). The flexible linker stretch occupies residues 143 to 153; the sequence is SLNIKNITPVT. The domain III stretch occupies residues 153–204; sequence TSNEVMKALINLGFSRFEAQNVVQGIITQNPKISIDELIKTALKNRNSKFFS.

This sequence belongs to the RuvA family. Homotetramer. Forms an RuvA(8)-RuvB(12)-Holliday junction (HJ) complex. HJ DNA is sandwiched between 2 RuvA tetramers; dsDNA enters through RuvA and exits via RuvB. An RuvB hexamer assembles on each DNA strand where it exits the tetramer. Each RuvB hexamer is contacted by two RuvA subunits (via domain III) on 2 adjacent RuvB subunits; this complex drives branch migration. In the full resolvosome a probable DNA-RuvA(4)-RuvB(12)-RuvC(2) complex forms which resolves the HJ.

The protein localises to the cytoplasm. Functionally, the RuvA-RuvB-RuvC complex processes Holliday junction (HJ) DNA during genetic recombination and DNA repair, while the RuvA-RuvB complex plays an important role in the rescue of blocked DNA replication forks via replication fork reversal (RFR). RuvA specifically binds to HJ cruciform DNA, conferring on it an open structure. The RuvB hexamer acts as an ATP-dependent pump, pulling dsDNA into and through the RuvAB complex. HJ branch migration allows RuvC to scan DNA until it finds its consensus sequence, where it cleaves and resolves the cruciform DNA. The polypeptide is Holliday junction branch migration complex subunit RuvA (Rickettsia canadensis (strain McKiel)).